The following is a 287-amino-acid chain: 4-diphosphocytidyl-2-C-methyl-D-erythritol kinase (287 aa).

Residue K10 is part of the active site. Residue 92–102 (PLAAGLAGGSA) participates in ATP binding. D134 is a catalytic residue.

It belongs to the GHMP kinase family. IspE subfamily.

It carries out the reaction 4-CDP-2-C-methyl-D-erythritol + ATP = 4-CDP-2-C-methyl-D-erythritol 2-phosphate + ADP + H(+). It functions in the pathway isoprenoid biosynthesis; isopentenyl diphosphate biosynthesis via DXP pathway; isopentenyl diphosphate from 1-deoxy-D-xylulose 5-phosphate: step 3/6. Its function is as follows. Catalyzes the phosphorylation of the position 2 hydroxy group of 4-diphosphocytidyl-2C-methyl-D-erythritol. The polypeptide is 4-diphosphocytidyl-2-C-methyl-D-erythritol kinase (Caldanaerobacter subterraneus subsp. tengcongensis (strain DSM 15242 / JCM 11007 / NBRC 100824 / MB4) (Thermoanaerobacter tengcongensis)).